Consider the following 62-residue polypeptide: Large ribosomal subunit protein uL30 (62 aa).

It belongs to the universal ribosomal protein uL30 family. In terms of assembly, part of the 50S ribosomal subunit.

This Staphylococcus carnosus (strain TM300) protein is Large ribosomal subunit protein uL30.